Here is a 225-residue protein sequence, read N- to C-terminus: NAD(P)H-quinone oxidoreductase subunit K, chloroplastic (225 aa).

Positions 43, 44, 108, and 139 each coordinate [4Fe-4S] cluster.

The protein belongs to the complex I 20 kDa subunit family. NDH is composed of at least 16 different subunits, 5 of which are encoded in the nucleus. The cofactor is [4Fe-4S] cluster.

It localises to the plastid. The protein localises to the chloroplast thylakoid membrane. It carries out the reaction a plastoquinone + NADH + (n+1) H(+)(in) = a plastoquinol + NAD(+) + n H(+)(out). The catalysed reaction is a plastoquinone + NADPH + (n+1) H(+)(in) = a plastoquinol + NADP(+) + n H(+)(out). Functionally, NDH shuttles electrons from NAD(P)H:plastoquinone, via FMN and iron-sulfur (Fe-S) centers, to quinones in the photosynthetic chain and possibly in a chloroplast respiratory chain. The immediate electron acceptor for the enzyme in this species is believed to be plastoquinone. Couples the redox reaction to proton translocation, and thus conserves the redox energy in a proton gradient. In Solanum bulbocastanum (Wild potato), this protein is NAD(P)H-quinone oxidoreductase subunit K, chloroplastic.